The sequence spans 552 residues: Oxygen-dependent choline dehydrogenase (552 aa).

An FAD-binding site is contributed by 7 to 36; it reads DYIIIGAGSAGNVLAARLTEDKDTTVLLLE. Histidine 477 acts as the Proton acceptor in catalysis.

The protein belongs to the GMC oxidoreductase family. It depends on FAD as a cofactor.

It catalyses the reaction choline + A = betaine aldehyde + AH2. It carries out the reaction betaine aldehyde + NAD(+) + H2O = glycine betaine + NADH + 2 H(+). The protein operates within amine and polyamine biosynthesis; betaine biosynthesis via choline pathway; betaine aldehyde from choline (cytochrome c reductase route): step 1/1. Functionally, involved in the biosynthesis of the osmoprotectant glycine betaine. Catalyzes the oxidation of choline to betaine aldehyde and betaine aldehyde to glycine betaine at the same rate. This chain is Oxygen-dependent choline dehydrogenase, found in Acinetobacter baumannii (strain AB307-0294).